A 178-amino-acid polypeptide reads, in one-letter code: Large ribosomal subunit protein bL17 (178 aa).

It belongs to the bacterial ribosomal protein bL17 family. In terms of assembly, part of the 50S ribosomal subunit. Contacts protein L32.

The protein is Large ribosomal subunit protein bL17 of Lachnospira eligens (strain ATCC 27750 / DSM 3376 / VPI C15-48 / C15-B4) (Eubacterium eligens).